The sequence spans 252 residues: 3-dehydroquinate dehydratase (252 aa).

Residues Ser21, 46 to 48 (EWR), and Arg82 contribute to the 3-dehydroquinate site. His143 functions as the Proton donor/acceptor in the catalytic mechanism. Residue Lys170 is the Schiff-base intermediate with substrate of the active site. Residues Arg213, Ser232, and Gln236 each contribute to the 3-dehydroquinate site.

Belongs to the type-I 3-dehydroquinase family. In terms of assembly, homodimer.

It carries out the reaction 3-dehydroquinate = 3-dehydroshikimate + H2O. It participates in metabolic intermediate biosynthesis; chorismate biosynthesis; chorismate from D-erythrose 4-phosphate and phosphoenolpyruvate: step 3/7. Functionally, involved in the third step of the chorismate pathway, which leads to the biosynthesis of aromatic amino acids. Catalyzes the cis-dehydration of 3-dehydroquinate (DHQ) and introduces the first double bond of the aromatic ring to yield 3-dehydroshikimate. This Escherichia coli O7:K1 (strain IAI39 / ExPEC) protein is 3-dehydroquinate dehydratase.